We begin with the raw amino-acid sequence, 293 residues long: Pyridoxal 5'-phosphate synthase subunit PdxS (293 aa).

Asp23 is a D-ribose 5-phosphate binding site. The Schiff-base intermediate with D-ribose 5-phosphate role is filled by Lys80. Residue Gly152 participates in D-ribose 5-phosphate binding. Position 164 (Arg164) interacts with D-glyceraldehyde 3-phosphate. D-ribose 5-phosphate contacts are provided by residues Gly213 and 234–235 (GS).

It belongs to the PdxS/SNZ family. In the presence of PdxT, forms a dodecamer of heterodimers.

The enzyme catalyses aldehydo-D-ribose 5-phosphate + D-glyceraldehyde 3-phosphate + L-glutamine = pyridoxal 5'-phosphate + L-glutamate + phosphate + 3 H2O + H(+). Its pathway is cofactor biosynthesis; pyridoxal 5'-phosphate biosynthesis. Catalyzes the formation of pyridoxal 5'-phosphate from ribose 5-phosphate (RBP), glyceraldehyde 3-phosphate (G3P) and ammonia. The ammonia is provided by the PdxT subunit. Can also use ribulose 5-phosphate and dihydroxyacetone phosphate as substrates, resulting from enzyme-catalyzed isomerization of RBP and G3P, respectively. In Herpetosiphon aurantiacus (strain ATCC 23779 / DSM 785 / 114-95), this protein is Pyridoxal 5'-phosphate synthase subunit PdxS.